The primary structure comprises 353 residues: Polyprenal reductase 2 (353 aa).

A run of 6 helical transmembrane segments spans residues 11 to 31, 78 to 98, 175 to 195, 234 to 254, 291 to 308, and 313 to 335; these read PLLC…ALPI, FMHF…AIWF, MHIV…LSLA, PLLK…WGSL, YLAE…SGAE, and WFLF…NWYL.

Belongs to the steroid 5-alpha reductase family. Polyprenal reductase subfamily.

The protein localises to the cell membrane. It catalyses the reaction a di-trans,poly-cis-dolichal + NADP(+) = a di-trans,poly-cis-polyprenal + NADPH + H(+). It participates in protein modification; protein glycosylation. Functionally, plays a key role in early steps of protein N-linked glycosylation by being involved in the conversion of polyprenol into dolichol. Acts as a polyprenal reductase that mediates the reduction of polyprenal into dolichal in a NADP-dependent mechanism. Dolichols are required for the synthesis of dolichol-linked monosaccharides and the oligosaccharide precursor used for N-glycosylation. This chain is Polyprenal reductase 2, found in Oryza sativa subsp. japonica (Rice).